Consider the following 223-residue polypeptide: Large ribosomal subunit protein bL25 (223 aa).

The segment at E198–E223 is disordered.

This sequence belongs to the bacterial ribosomal protein bL25 family. CTC subfamily. In terms of assembly, part of the 50S ribosomal subunit; part of the 5S rRNA/L5/L18/L25 subcomplex. Contacts the 5S rRNA. Binds to the 5S rRNA independently of L5 and L18.

Functionally, this is one of the proteins that binds to the 5S RNA in the ribosome where it forms part of the central protuberance. The protein is Large ribosomal subunit protein bL25 of Thermomicrobium roseum (strain ATCC 27502 / DSM 5159 / P-2).